The primary structure comprises 275 residues: Ciliary microtubule inner protein 2B (275 aa).

Disordered stretches follow at residues 62-84 (PPIR…RGQE) and 125-169 (EKQG…SPYS). 2 stretches are compositionally biased toward basic and acidic residues: residues 71–84 (EVPR…RGQE) and 125–147 (EKQG…KDQV).

The protein belongs to the CIMIP2 family. In terms of assembly, microtubule inner protein component of sperm flagellar doublet microtubules. As to expression, expressed in airway epithelial cells.

Its subcellular location is the cytoplasm. It localises to the cytoskeleton. It is found in the cilium axoneme. The protein resides in the flagellum axoneme. Microtubule inner protein (MIP) part of the dynein-decorated doublet microtubules (DMTs) in cilia axoneme, which is required for motile cilia beating. The protein is Ciliary microtubule inner protein 2B of Homo sapiens (Human).